The following is a 156-amino-acid chain: D-aminoacyl-tRNA deacylase (156 aa).

Positions 137-138 (GP) match the Gly-cisPro motif, important for rejection of L-amino acids motif.

It belongs to the DTD family. In terms of assembly, homodimer.

The protein localises to the cytoplasm. It carries out the reaction glycyl-tRNA(Ala) + H2O = tRNA(Ala) + glycine + H(+). The catalysed reaction is a D-aminoacyl-tRNA + H2O = a tRNA + a D-alpha-amino acid + H(+). Functionally, an aminoacyl-tRNA editing enzyme that deacylates mischarged D-aminoacyl-tRNAs. Also deacylates mischarged glycyl-tRNA(Ala), protecting cells against glycine mischarging by AlaRS. Acts via tRNA-based rather than protein-based catalysis; rejects L-amino acids rather than detecting D-amino acids in the active site. By recycling D-aminoacyl-tRNA to D-amino acids and free tRNA molecules, this enzyme counteracts the toxicity associated with the formation of D-aminoacyl-tRNA entities in vivo and helps enforce protein L-homochirality. This is D-aminoacyl-tRNA deacylase from Ruegeria sp. (strain TM1040) (Silicibacter sp.).